Here is a 485-residue protein sequence, read N- to C-terminus: Glutamyl-tRNA(Gln) amidotransferase subunit A (485 aa).

Catalysis depends on charge relay system residues Lys-79 and Ser-154. Catalysis depends on Ser-178, which acts as the Acyl-ester intermediate.

This sequence belongs to the amidase family. GatA subfamily. As to quaternary structure, heterotrimer of A, B and C subunits.

The catalysed reaction is L-glutamyl-tRNA(Gln) + L-glutamine + ATP + H2O = L-glutaminyl-tRNA(Gln) + L-glutamate + ADP + phosphate + H(+). In terms of biological role, allows the formation of correctly charged Gln-tRNA(Gln) through the transamidation of misacylated Glu-tRNA(Gln) in organisms which lack glutaminyl-tRNA synthetase. The reaction takes place in the presence of glutamine and ATP through an activated gamma-phospho-Glu-tRNA(Gln). In Geobacillus kaustophilus (strain HTA426), this protein is Glutamyl-tRNA(Gln) amidotransferase subunit A.